Consider the following 177-residue polypeptide: Large ribosomal subunit protein uL16m (177 aa).

It belongs to the universal ribosomal protein uL16 family.

The protein localises to the mitochondrion. In Brassica napus (Rape), this protein is Large ribosomal subunit protein uL16m (RPL16).